Consider the following 934-residue polypeptide: Serine/threonine-protein kinase PknD (934 aa).

A Protein kinase domain is found at 4-296 (YELIRLIGKG…ELRQALQPYL (293 aa)). ATP is bound by residues 10-18 (IGKGGMGEV) and lysine 33. Catalysis depends on aspartate 138, which acts as the Proton acceptor.

The protein belongs to the protein kinase superfamily. Ser/Thr protein kinase family. Autophosphorylated on serine and threonine residues.

It catalyses the reaction L-seryl-[protein] + ATP = O-phospho-L-seryl-[protein] + ADP + H(+). The enzyme catalyses L-threonyl-[protein] + ATP = O-phospho-L-threonyl-[protein] + ADP + H(+). In terms of biological role, together with the serine/threonine kinase Pkn1, may play a role in the specific interactions with host proteins during intracellular growth. This Chlamydia trachomatis serovar A (strain ATCC VR-571B / DSM 19440 / HAR-13) protein is Serine/threonine-protein kinase PknD.